A 474-amino-acid polypeptide reads, in one-letter code: MRRVVRQSKFRHVFGQAVKNDQCYDDIRVSRVTWDSSFCAVNPRFVAIIIEASGGGAFLVLPLHKTGRIDKSYPTVCGHTGPVLDIDWCPHNDQVIASGSEDCTVMVWQIPENGLTLSLTEPVVILEGHSKRVGIVAWHPTARNVLLSAGCDNAIIIWNVGTGEALINLDDMHSDMIYNVSWNRNGSLICTASKDKKVRVIDPRKQEIVAEKEKAHEGARPMRAIFLADGNVFTTGFSRMSERQLALWNPKNMQEPIALHEMDTSNGVLLPFYDPDTSIIYLCGKGDSSIRYFEITDESPYVHYLNTFSSKEPQRGMGYMPKRGLDVNKCEIARFFKLHERKCEPIIMTVPRKSDLFQDDLYPDTAGPEAALEAEEWFEGKNADPILISLKHGYIPGKNRDLKVVKKNILDSKPTANKKCDLISIPKKTTDTASVQNEAKLDEILKEIKSIKDTICNQDERISKLEQQMAKIAA.

WD repeat units follow at residues 25–70 (DDIR…GRID), 78–118 (GHTG…LTLS), 128–168 (GHSK…ALIN), 172–202 (MHSD…RVID), 215–249 (AHEG…ALWN), and 263–303 (DTSN…PYVH). Positions 436 to 474 (QNEAKLDEILKEIKSIKDTICNQDERISKLEQQMAKIAA) form a coiled coil. Lys446 is modified (N6-acetyllysine).

Belongs to the WD repeat coronin family. Binds F-actin. Interacts with RCC2. Interacts preferentially with nucleotide-free and GDP-bound RAC1. Interacts with VIM (via head domain). Isoform 1 and isoform 2 appear as homotrimers, while isoform 3 seems to exist as monomers. Interacts with MICAL2; this interaction recruits MICAL2 to the actin filaments. In terms of tissue distribution, ubiquitous.

The protein resides in the cell membrane. It is found in the cell projection. It localises to the lamellipodium. Its subcellular location is the ruffle membrane. The protein localises to the cytoplasm. The protein resides in the cytoskeleton. It is found in the cell cortex. It localises to the endosome membrane. Its subcellular location is the sarcolemma. The protein localises to the myofibril. The protein resides in the sarcomere. It is found in the synapse. Its function is as follows. Plays a role in directed cell migration by regulating the activation and subcellular location of RAC1. Increases the presence of activated RAC1 at the leading edge of migrating cells. Required for normal organization of the cytoskeleton, including the actin cytoskeleton, microtubules and the vimentin intermediate filaments. Plays a role in endoplasmic reticulum-associated endosome fission: localizes to endosome membrane tubules and promotes recruitment of TMCC1, leading to recruitment of the endoplasmic reticulum to endosome tubules for fission. Endosome membrane fission of early and late endosomes is essential to separate regions destined for lysosomal degradation from carriers to be recycled to the plasma membrane. Required for normal cell proliferation, cell migration, and normal formation of lamellipodia. Required for normal distribution of mitochondria within cells. In terms of biological role, involved in myogenic differentiation. This is Coronin-1C from Homo sapiens (Human).